The chain runs to 138 residues: MTQMTVQVVTPDGIKYDHQAKFISVETTDGEMGILPRHINLIAPLVIHEMKIRRTDDDNHVDWVAINGGIIEIKDNVVTIVADSAERSRDIDVSRAERAKLRAEREIEAAKSAHDIDEVQRAQVALRRALNRINVGNK.

It belongs to the ATPase epsilon chain family. As to quaternary structure, F-type ATPases have 2 components, CF(1) - the catalytic core - and CF(0) - the membrane proton channel. CF(1) has five subunits: alpha(3), beta(3), gamma(1), delta(1), epsilon(1). CF(0) has three main subunits: a, b and c.

It is found in the cell membrane. Its function is as follows. Produces ATP from ADP in the presence of a proton gradient across the membrane. In Streptococcus uberis (strain ATCC BAA-854 / 0140J), this protein is ATP synthase epsilon chain.